Consider the following 476-residue polypeptide: Glycogen synthase (476 aa).

ADP-alpha-D-glucose is bound at residue lysine 15.

The protein belongs to the glycosyltransferase 1 family. Bacterial/plant glycogen synthase subfamily.

It carries out the reaction [(1-&gt;4)-alpha-D-glucosyl](n) + ADP-alpha-D-glucose = [(1-&gt;4)-alpha-D-glucosyl](n+1) + ADP + H(+). The protein operates within glycan biosynthesis; glycogen biosynthesis. Synthesizes alpha-1,4-glucan chains using ADP-glucose. This chain is Glycogen synthase, found in Bacillus cereus (strain ZK / E33L).